We begin with the raw amino-acid sequence, 448 residues long: MRPWEVAVSRRPTTAPLNQRRLVGEPCITPLHLRRSPPVRHQWGQRDRPALHTSLHQDENFHHAVFSQHQQVPLDESRQYSHSGAAPRMLHTANQPPQQSSIMVDLHEQMHQGSVPISYTVTTVTTHGFPIHTGQPIPACNAQQLPACSVMFSGQLSLLCCLPPPLIQACTMQHLPVSYQAFPPLISSEHFILHPSPAVAPHQPPPHPPHPPPPHLPPINQFVPIQPQHPRMPLQRVENEVDLRGDQHPLGTFSYPPAHHPPALTPSVPLQYLPQETLHQELPYPVPYPHMLPRRITGQRYRLQQPLPPPPPPPPYYPGFLPYFLSMLPVPPTAVGPAISLDLDVDDVEMENYEALLNLAERLGEAKPRGLTKADIEQLPSYRFNLENHQSEQTLCVVCFSDFESRQLLRVLPCNHEFHAKCVDKWLKTNRTCPICRADASEVHRDVE.

The RING-type; atypical zinc finger occupies 396–437; it reads CVVCFSDFESRQLLRVLPCNHEFHAKCVDKWLKTNRTCPICR.

This chain is RING finger protein 44 (rnf44), found in Danio rerio (Zebrafish).